We begin with the raw amino-acid sequence, 148 residues long: SsrA-binding protein (148 aa).

The tract at residues 124–148 (QFDKRETEKDRDWQREKARLMREKA) is disordered.

Belongs to the SmpB family.

The protein localises to the cytoplasm. Functionally, required for rescue of stalled ribosomes mediated by trans-translation. Binds to transfer-messenger RNA (tmRNA), required for stable association of tmRNA with ribosomes. tmRNA and SmpB together mimic tRNA shape, replacing the anticodon stem-loop with SmpB. tmRNA is encoded by the ssrA gene; the 2 termini fold to resemble tRNA(Ala) and it encodes a 'tag peptide', a short internal open reading frame. During trans-translation Ala-aminoacylated tmRNA acts like a tRNA, entering the A-site of stalled ribosomes, displacing the stalled mRNA. The ribosome then switches to translate the ORF on the tmRNA; the nascent peptide is terminated with the 'tag peptide' encoded by the tmRNA and targeted for degradation. The ribosome is freed to recommence translation, which seems to be the essential function of trans-translation. This Ralstonia pickettii (strain 12J) protein is SsrA-binding protein.